Reading from the N-terminus, the 286-residue chain is Polyamine aminopropyltransferase (286 aa).

In terms of domain architecture, PABS spans 5-238 (PLWHETLHDH…GIMTFAWASD (234 aa)). An S-methyl-5'-thioadenosine-binding site is contributed by glutamine 33. Residues histidine 64 and aspartate 88 each coordinate spermidine. Residues glutamate 108 and 140-141 (DG) each bind S-methyl-5'-thioadenosine. The active-site Proton acceptor is the aspartate 158. 158–161 (DCTD) serves as a coordination point for spermidine. Residue proline 165 participates in S-methyl-5'-thioadenosine binding.

This sequence belongs to the spermidine/spermine synthase family. As to quaternary structure, homodimer or homotetramer.

It is found in the cytoplasm. The enzyme catalyses S-adenosyl 3-(methylsulfanyl)propylamine + putrescine = S-methyl-5'-thioadenosine + spermidine + H(+). It participates in amine and polyamine biosynthesis; spermidine biosynthesis; spermidine from putrescine: step 1/1. In terms of biological role, catalyzes the irreversible transfer of a propylamine group from the amino donor S-adenosylmethioninamine (decarboxy-AdoMet) to putrescine (1,4-diaminobutane) to yield spermidine. This chain is Polyamine aminopropyltransferase, found in Klebsiella pneumoniae (strain 342).